The following is a 131-amino-acid chain: Small ribosomal subunit protein uS8 (131 aa).

This sequence belongs to the universal ribosomal protein uS8 family. As to quaternary structure, part of the 30S ribosomal subunit. Contacts proteins S5 and S12.

Functionally, one of the primary rRNA binding proteins, it binds directly to 16S rRNA central domain where it helps coordinate assembly of the platform of the 30S subunit. This Campylobacter jejuni subsp. jejuni serotype O:23/36 (strain 81-176) protein is Small ribosomal subunit protein uS8.